Consider the following 245-residue polypeptide: Protein crossbronx (245 aa).

The UBC core domain maps to 20-177; that stretch reads QQEYKILAEY…VQESIVESKS (158 aa).

The protein belongs to the ubiquitin-conjugating enzyme family. FTS subfamily.

This Drosophila virilis (Fruit fly) protein is Protein crossbronx (cbx).